The chain runs to 63 residues: Cytochrome c oxidase subunit 5C (63 aa).

The chain crosses the membrane as a helical span at residues 16 to 34; it reads VVKEICIGLTLGLVAGGLW.

It belongs to the cytochrome c oxidase subunit 5C family.

The protein localises to the mitochondrion inner membrane. In terms of biological role, this protein is one of the nuclear-coded polypeptide chains of cytochrome c oxidase, the terminal oxidase in mitochondrial electron transport. The protein is Cytochrome c oxidase subunit 5C (COX5C) of Oryza sativa subsp. japonica (Rice).